Consider the following 65-residue polypeptide: Conotoxin Cal1.3 (65 aa).

The signal sequence occupies residues 1–18 (MRCLPVFIILLLLASTAA). Residues 19 to 49 (VDVAGSKLKRRLERKPYQGSQAYVKKTAFGL) constitute a propeptide that is removed on maturation. Disulfide bonds link cysteine 52-cysteine 62 and cysteine 53-cysteine 59. The residue at position 61 (proline 61) is a 4-hydroxyproline. A Cysteine amide modification is found at cysteine 62.

This sequence belongs to the conotoxin T superfamily. As to expression, expressed by the venom duct.

The protein resides in the secreted. Functionally, probable neurotoxin with unknown target. Possibly targets ion channels. The sequence is that of Conotoxin Cal1.3 from Californiconus californicus (California cone).